Here is a 218-residue protein sequence, read N- to C-terminus: Octanoyltransferase (218 aa).

Residues 31–206 enclose the BPL/LPL catalytic domain; sequence EETPDEVWLV…ELVNLLGYEQ (176 aa). Substrate-binding positions include 70–77, 137–139, and 150–152; these read RGGQVTYH, SLG, and GLA. Cys-168 (acyl-thioester intermediate) is an active-site residue.

It belongs to the LipB family.

The protein localises to the cytoplasm. The catalysed reaction is octanoyl-[ACP] + L-lysyl-[protein] = N(6)-octanoyl-L-lysyl-[protein] + holo-[ACP] + H(+). Its pathway is protein modification; protein lipoylation via endogenous pathway; protein N(6)-(lipoyl)lysine from octanoyl-[acyl-carrier-protein]: step 1/2. Functionally, catalyzes the transfer of endogenously produced octanoic acid from octanoyl-acyl-carrier-protein onto the lipoyl domains of lipoate-dependent enzymes. Lipoyl-ACP can also act as a substrate although octanoyl-ACP is likely to be the physiological substrate. The polypeptide is Octanoyltransferase (Vibrio vulnificus (strain CMCP6)).